The following is a 160-amino-acid chain: Transcription antitermination protein NusB (160 aa).

This sequence belongs to the NusB family.

Its function is as follows. Involved in transcription antitermination. Required for transcription of ribosomal RNA (rRNA) genes. Binds specifically to the boxA antiterminator sequence of the ribosomal RNA (rrn) operons. The polypeptide is Transcription antitermination protein NusB (Chlamydia pneumoniae (Chlamydophila pneumoniae)).